The following is a 502-amino-acid chain: MPRGCAGARFACNACLNFLAGLGISEPISPGWAAMERLSGLDAFFLYMETPSQPLNVCCVLELDTSTMPGGYTYGRFHAALEKYVKAAPEFRMKLADTELNLDHPVWVDDDNFQIRHHLRRVAMPAPGGRRELAEICGYIAGLPLDRDRPLWEMWVIEGGARSDTVAVMLKVHHAVVDGVAGANLLSHLCSLQPDAPAPQPVRGTGGGNVLQIAASGLEGFASRPVRLATVVPATVLTLVRTLLRAREGRTMAAPFSAPPTPFNGPLGRLRNIAYTQLDMRDVKRVKDRFGVTINDVVVALCAGALRRFLLEHGVLPEAPLVATVPVSVHDKSDRPGRNQATWMFCRVPSQISDPAQRIRTIAAGNTVAKDHAAAIGPTLLHDWIQFGGSTMFGAAMRILPHISITHSPAYNLILSNVPGPQAQLYFLGCRMDSMFPLGPLLGNAGLNITVMSLNGELGVGIVSCPDLLPDLWGVADGFPEALKELLECSDDQPEGSNHQDS.

Histidine 174 acts as the Proton acceptor in catalysis.

The protein belongs to the long-chain O-acyltransferase family.

It carries out the reaction an acyl-CoA + a 1,2-diacyl-sn-glycerol = a triacyl-sn-glycerol + CoA. The catalysed reaction is di-(9Z)-octadecenoylglycerol + (9Z)-octadecenoyl-CoA = 1,2,3-tri-(9Z-octadecenoyl)-glycerol + CoA. The protein operates within glycerolipid metabolism; triacylglycerol biosynthesis. Catalyzes the terminal and only committed step in triacylglycerol synthesis by using diacylglycerol and fatty acyl CoA as substrates. Required for storage lipid synthesis. In terms of biological role, upon expression in E.coli functions weakly as a triacylglycerol synthase, making triacylglycerol (TG) from diolein and long-chain fatty acyl-CoA. Has very weak wax synthase activity, incorporating palmityl alcohol into wax esters in the presence of palmitoyl-CoA. The chain is Putative diacyglycerol O-acyltransferase Rv1760 from Mycobacterium tuberculosis (strain ATCC 25618 / H37Rv).